Consider the following 430-residue polypeptide: MLLKLDSRKADFQADFTRLVDERRESEGDVSRDVSAIIADVKKRGDVAIAELTQKFDRHDLNKGGWQLTQEEIKKACDSLPSELMDALKLAATRIRYCHENQLPESSEMTDAAGVRMGVRWQAVEAAGLYVPGGRAAYCSSVLMNAVPAKVAGVKRLVMVTPTPDGFVNPAVIAAAVISEVDEIWKIGGAQAVAALALGTEKIKPVDVVVGPGNAWVAEAKRQLYGQVGIDMVAGPSEIVVVADKDNDPEWLAADLLSQAEHDPTSQSILISDSEDLIEKTIEAVGRRLEKLETQKVARESWDKHGATILVQSLDEAPALVDRLAPEHLELAVADPDALFANVHHSGSVFLGRYTPEAIGDYVGGPNHVLPTGRRARFSSGLSVIDFMKRTTYLNCSQEALSKIGPAAVTLAKAEGLPAHAESVISRLNK.

The NAD(+) site is built by Tyr130, Gln191, and Asn214. Residues Ser237, Gln259, and His262 each contribute to the substrate site. Zn(2+) is bound by residues Gln259 and His262. Active-site proton acceptor residues include Glu327 and His328. The substrate site is built by His328, Asp361, Glu415, and His420. Residue Asp361 participates in Zn(2+) binding. Residue His420 coordinates Zn(2+).

This sequence belongs to the histidinol dehydrogenase family. The cofactor is Zn(2+).

It carries out the reaction L-histidinol + 2 NAD(+) + H2O = L-histidine + 2 NADH + 3 H(+). Its pathway is amino-acid biosynthesis; L-histidine biosynthesis; L-histidine from 5-phospho-alpha-D-ribose 1-diphosphate: step 9/9. In terms of biological role, catalyzes the sequential NAD-dependent oxidations of L-histidinol to L-histidinaldehyde and then to L-histidine. This Zymomonas mobilis subsp. mobilis (strain ATCC 31821 / ZM4 / CP4) protein is Histidinol dehydrogenase (hisD).